Here is a 111-residue protein sequence, read N- to C-terminus: MTLADLKKPTSRATPSTEETFTRVRTPRRENNEILATVESLLGANRLRLRCMDGVVRMGRIPGSMKKKTWIREGDVVIVVPWEFQNEKADVIWKYTRPQVDWLERKGYLKG.

The segment at 1–26 (MTLADLKKPTSRATPSTEETFTRVRT) is disordered. An S1-like domain is found at 22 to 96 (TRVRTPRREN…EKADVIWKYT (75 aa)).

Belongs to the eIF-1A family.

In terms of biological role, seems to be required for maximal rate of protein biosynthesis. Enhances ribosome dissociation into subunits and stabilizes the binding of the initiator Met-tRNA(I) to 40 S ribosomal subunits. The chain is Translation initiation factor 1A 1 (eIF1A1) from Methanosarcina acetivorans (strain ATCC 35395 / DSM 2834 / JCM 12185 / C2A).